A 247-amino-acid chain; its full sequence is UPF0246 protein LSL_1719 (247 aa).

It belongs to the UPF0246 family.

The chain is UPF0246 protein LSL_1719 from Ligilactobacillus salivarius (strain UCC118) (Lactobacillus salivarius).